A 432-amino-acid polypeptide reads, in one-letter code: Trigger factor (432 aa).

Positions E161 to P246 constitute a PPIase FKBP-type domain.

It belongs to the FKBP-type PPIase family. Tig subfamily. Homodimer and monomer. In vivo most of the ribosomes are in complex with monomeric TF. Uncomplexed TF, however, is in a monomer-dimer equilibrium with approximately two thirds of TF existing in a dimeric state.

The protein resides in the cytoplasm. It catalyses the reaction [protein]-peptidylproline (omega=180) = [protein]-peptidylproline (omega=0). Functionally, involved in protein export. Acts as a chaperone by maintaining the newly synthesized protein in an open conformation. Functions as a peptidyl-prolyl cis-trans isomerase. This Escherichia fergusonii (strain ATCC 35469 / DSM 13698 / CCUG 18766 / IAM 14443 / JCM 21226 / LMG 7866 / NBRC 102419 / NCTC 12128 / CDC 0568-73) protein is Trigger factor.